The primary structure comprises 188 residues: Small ribosomal subunit protein uS12m (188 aa).

A mitochondrion-targeting transit peptide spans 1-63 (MSGGRWISNL…AAFRLPQSSG (63 aa)).

Belongs to the universal ribosomal protein uS12 family.

Its subcellular location is the mitochondrion. Functionally, protein S12 is involved in the translation initiation step. This is Small ribosomal subunit protein uS12m (RPS12) from Oenothera elata subsp. hookeri (Hooker's evening primrose).